The following is a 1065-amino-acid chain: Pumilio domain-containing protein P35G2.14 (1065 aa).

Disordered stretches follow at residues 1-78 (MHQD…SLRS), 130-265 (ITSK…PWSP), and 422-573 (TTGF…NTNS). The span at 16-44 (RNTISKPSNNNPPLDMSSLNNDFGQQLDS) shows a compositional bias: polar residues. The span at 59–77 (NPSSNFNDSNRSNISSSLR) shows a compositional bias: low complexity. Composition is skewed to polar residues over residues 134–151 (LQNNSNLSVTSSANRGRT) and 169–189 (SSVSSGKQHLSSLSLHTHFNP). Composition is skewed to low complexity over residues 190-224 (SSSSTVSSDSLESSQQKAPSSSSTATPASAASEII) and 236-246 (SASNAANSGSN). Polar residues-rich tracts occupy residues 247 to 262 (TIRARQTTRTRSNTLP) and 434 to 455 (GLNTSLFNTSSGGSLKSPTFEV). The residue at position 260 (threonine 260) is a Phosphothreonine. Residues 470–483 (PLGSLSSRPKPSSS) show a composition bias toward low complexity. Polar residues-rich tracts occupy residues 495–522 (LKTSNPYMPSPSLLSGSLANSSEHSSSP) and 529–551 (IHNQPVSSSKSTASLNTNNNGLR). Phosphoserine occurs at positions 506, 511, and 515. Position 554 is a phosphothreonine (threonine 554). Residues 559-573 (NISTRSSSESNNTNS) are compositionally biased toward low complexity. The RRM domain occupies 592–666 (HALWVGNLPS…DPVCISFAKV (75 aa)). A PUM-HD domain is found at 712–1065 (DLSKIYQILN…ELKKLAEVCA (354 aa)). Pumilio repeat units lie at residues 771-808 (AINWLDEVSDLSSDHLGNTVVQKLFDYCSDPVKEMMLE), 809-844 (RIAPHLAQIGIHKNGTWAAQKIVDVASTEAQMRLIA), 846-884 (HLQPYIPLLFADQFGNYVVQTCLKFGAPMNDFVFEAILN), 886-917 (FWVIAQSRYGSRAVRACLESPDVTEEQRVLVA), 919-954 (AITVYSVHLAMNGNGTLLLTYLVENMNYPHIPILLT), and 956-993 (RFVQDIVRVCTHRLAYNSLLKIISISQGDTACGDLVVD).

The protein resides in the cytoplasm. This is Pumilio domain-containing protein P35G2.14 from Schizosaccharomyces pombe (strain 972 / ATCC 24843) (Fission yeast).